Reading from the N-terminus, the 149-residue chain is Arginine repressor (149 aa).

The protein belongs to the ArgR family.

The protein resides in the cytoplasm. Its pathway is amino-acid biosynthesis; L-arginine biosynthesis [regulation]. Regulates arginine biosynthesis genes. The sequence is that of Arginine repressor from Bacillus mycoides (strain KBAB4) (Bacillus weihenstephanensis).